The sequence spans 134 residues: Iron-sulfur cluster insertion protein ErpA (134 aa).

Cys-47, Cys-126, and Cys-128 together coordinate iron-sulfur cluster.

It belongs to the HesB/IscA family. As to quaternary structure, homodimer. Iron-sulfur cluster is required as a cofactor.

Required for insertion of 4Fe-4S clusters for at least IspG. The protein is Iron-sulfur cluster insertion protein ErpA of Coxiella burnetii (strain RSA 331 / Henzerling II).